The following is a 388-amino-acid chain: Succinate--CoA ligase [ADP-forming] subunit beta (388 aa).

An ATP-grasp domain is found at 9-244; it reads KQLFAEFGLP…PSQEDEREAH (236 aa). ATP is bound by residues Lys-46, 53–55, Glu-99, Ser-102, and Glu-107; that span reads GRG. Positions 199 and 213 each coordinate Mg(2+). Substrate contacts are provided by residues Asn-264 and 321-323; that span reads GIV.

This sequence belongs to the succinate/malate CoA ligase beta subunit family. Heterotetramer of two alpha and two beta subunits. Mg(2+) serves as cofactor.

The enzyme catalyses succinate + ATP + CoA = succinyl-CoA + ADP + phosphate. It carries out the reaction GTP + succinate + CoA = succinyl-CoA + GDP + phosphate. It functions in the pathway carbohydrate metabolism; tricarboxylic acid cycle; succinate from succinyl-CoA (ligase route): step 1/1. In terms of biological role, succinyl-CoA synthetase functions in the citric acid cycle (TCA), coupling the hydrolysis of succinyl-CoA to the synthesis of either ATP or GTP and thus represents the only step of substrate-level phosphorylation in the TCA. The beta subunit provides nucleotide specificity of the enzyme and binds the substrate succinate, while the binding sites for coenzyme A and phosphate are found in the alpha subunit. The chain is Succinate--CoA ligase [ADP-forming] subunit beta from Vibrio parahaemolyticus serotype O3:K6 (strain RIMD 2210633).